A 554-amino-acid polypeptide reads, in one-letter code: MIKMMVCGILLFEFSFLMMLMSLYLLYLNKEFFFEWNIYTFNSMKFNFLLLIDYKSLMFIFLVSMIFSMIIIYSISYMDLSELKMDRFLYLMILFLISMYMLILSPNMLSIILGWDGLGLISYCLVIYYMKMKSFTSGMVTILLNRLGDIGLLLIMGLMTYYGSWNLSFYKMNEFMMIYILLMAFTKSAQIPFSTWLPMAMMAPTPVSSLVHSSTLVTAGIYLLIRYVNLLDFNYKNYIMLIASLTMLFAGLVANFELDLKKVVAYSTLSQLGFMMSMLSIGSTELVFLHLFIHAMFKSLMFMCVGSYMHYMYSNQDIRMYYGMYYIYPMKSMILIFSILSLCGFPFLVGYYSKDLIIEMFFFSKMIYFSMINLIIGTIFTVSYSFRMILVLTSKFLMMNVIYSKEDKIMCISMMMMMIFSLIYSKLIFNLMNFNLLGINLLMIYKLMVFKMIMVGLIMGFNFYKLILLNNKIGYFKMSFLFMNLIYKIIYKKIIMMMFTYEVYIEKSIIEILSSKFMSVTLNIYELKISNLMINIYLTILIYLIYLLIYLINF.

The next 15 helical transmembrane spans lie at 6–26 (VCGI…LYLL), 57–77 (LMFI…SISY), 93–113 (ILFL…SIIL), 150–170 (IGLL…LSFY), 175–197 (FMMI…STWL), 209–228 (SLVH…IRYV), 238–258 (YIML…NFEL), 263–283 (VVAY…SIGS), 286–306 (LVFL…MCVG), 332–352 (SMIL…VGYY), 379–399 (IFTV…FLMM), 409–429 (IMCI…KLIF), 441–461 (LLMI…IMGF), 480–500 (FLFM…MMFT), and 532–552 (LMIN…IYLI).

This sequence belongs to the complex I subunit 5 family.

It is found in the mitochondrion inner membrane. The catalysed reaction is a ubiquinone + NADH + 5 H(+)(in) = a ubiquinol + NAD(+) + 4 H(+)(out). Core subunit of the mitochondrial membrane respiratory chain NADH dehydrogenase (Complex I) that is believed to belong to the minimal assembly required for catalysis. Complex I functions in the transfer of electrons from NADH to the respiratory chain. The immediate electron acceptor for the enzyme is believed to be ubiquinone. This chain is NADH-ubiquinone oxidoreductase chain 5 (ND5), found in Apis mellifera ligustica (Common honeybee).